Here is a 124-residue protein sequence, read N- to C-terminus: Splicing factor 3B subunit 6-like protein (124 aa).

The tract at residues 16–29 (EVNRVLYVRNLPFN) is interaction with pre-mRNA branch site. The RRM domain occupies 19–94 (RVLYVRNLPF…RYLIVLYYQH (76 aa)).

It localises to the nucleus. Its function is as follows. May be necessary for the splicing of pre-mRNA. The polypeptide is Splicing factor 3B subunit 6-like protein (Arabidopsis thaliana (Mouse-ear cress)).